We begin with the raw amino-acid sequence, 547 residues long: Chaperonin GroEL (547 aa).

ATP contacts are provided by residues 29–32, 86–90, Gly413, 478–480, and Asp494; these read TLGP, DGTTT, and DVL.

Belongs to the chaperonin (HSP60) family. As to quaternary structure, forms a cylinder of 14 subunits composed of two heptameric rings stacked back-to-back. Interacts with the co-chaperonin GroES.

It localises to the cytoplasm. The catalysed reaction is ATP + H2O + a folded polypeptide = ADP + phosphate + an unfolded polypeptide.. Functionally, together with its co-chaperonin GroES, plays an essential role in assisting protein folding. The GroEL-GroES system forms a nano-cage that allows encapsulation of the non-native substrate proteins and provides a physical environment optimized to promote and accelerate protein folding. The chain is Chaperonin GroEL from Alkaliphilus metalliredigens (strain QYMF).